We begin with the raw amino-acid sequence, 333 residues long: Phosphoenolpyruvate transferase (333 aa).

D65 contributes to the 7,8-didemethyl-8-hydroxy-5-deazariboflavin binding site.

It belongs to the CofD family. As to quaternary structure, homodimer. It depends on Mg(2+) as a cofactor.

It carries out the reaction enolpyruvoyl-2-diphospho-5'-guanosine + 7,8-didemethyl-8-hydroxy-5-deazariboflavin = dehydro coenzyme F420-0 + GMP + H(+). It functions in the pathway cofactor biosynthesis; coenzyme F420 biosynthesis. Catalyzes the transfer of the phosphoenolpyruvate moiety from enoylpyruvoyl-2-diphospho-5'-guanosine (EPPG) to 7,8-didemethyl-8-hydroxy-5-deazariboflavin (FO) with the formation of dehydro coenzyme F420-0 and GMP. This chain is Phosphoenolpyruvate transferase, found in Mycobacterium leprae (strain TN).